The chain runs to 262 residues: WW domain-binding protein 2 (262 aa).

In terms of domain architecture, GRAM spans 1–84 (MALNKNHSEG…YLMKDCEVKQ (84 aa)). At Tyr-192 the chain carries Phosphotyrosine. Positions 196–200 (PPPPY) match the PPxY motif 1 motif. The span at 197 to 206 (PPPYPGPMEP) shows a compositional bias: pro residues. Residues 197–262 (PPPYPGPMEP…YYPPEDKKTQ (66 aa)) are disordered. The segment covering 219 to 231 (AAEAKAAEAAASA) has biased composition (low complexity). The residue at position 232 (Tyr-232) is a Phosphotyrosine. Residues 246–255 (SQPPPPPYYP) are compositionally biased toward pro residues. The PPxY motif 2 signature appears at 249–253 (PPPPY).

In terms of assembly, binds to the WW domain of YAP1, WWP1 and WWP2. Interacts with NEDD4. Interacts with ESR1 and UBE3A. Post-translationally, phosphorylated in repsonse to EGF as well as estrogen and progesterone hormones. Tyr-192 and Tyr-232 are phosphorylated by YES and SRC inducing nuclear translocation.

It is found in the cytoplasm. The protein resides in the nucleus. Functionally, acts as a transcriptional coactivator of estrogen and progesterone receptors (ESR1 and PGR) upon hormone activation. In presence of estrogen, binds to ESR1-responsive promoters. Synergizes with YAP1 to enhance PGR activity. Modulates expression of post-synaptic scaffolding proteins via regulation of ESR1, ESR2 and PGR. This chain is WW domain-binding protein 2 (Wbp2), found in Rattus norvegicus (Rat).